The primary structure comprises 172 residues: Iron-sulfur cluster assembly protein SufA (172 aa).

The first 19 residues, 1-19, serve as a signal peptide directing secretion; the sequence is MFINIFLFLFAATINISSS. [4Fe-4S] cluster is bound by residues C96, C164, and C166.

It belongs to the HesB/IscA family. As to quaternary structure, homodimer.

Its subcellular location is the plastid. It localises to the apicoplast. It functions in the pathway cofactor biosynthesis; iron-sulfur cluster biosynthesis. In terms of biological role, participates in the sulfur mobilization (SUF) pathway for iron-sulfur (Fe-S) cluster biogenesis. Involved in the pre-assembly of [4Fe-4S] clusters and their transfer to target proteins. The chain is Iron-sulfur cluster assembly protein SufA from Plasmodium berghei (strain Anka).